The following is a 109-amino-acid chain: uncharacterized protein (109 aa).

The tract at residues 77-98 is disordered; sequence TRTGHAYPRFTRPSFPSCNRNG.

This is an uncharacterized protein from Homo sapiens (Human).